Here is a 152-residue protein sequence, read N- to C-terminus: Isoquinoline 1-oxidoreductase subunit alpha (152 aa).

Residues Met1–Leu77 form the 2Fe-2S ferredoxin-type domain. [2Fe-2S] cluster-binding residues include Cys39, Cys44, and Cys47.

Heterodimer of an alpha chain and a beta chain.

It carries out the reaction isoquinoline + A + H2O = isoquinolin-1(2H)-one + AH2. Functionally, specific towards N-containing N-heterocyclic substrates, including isoquinoline, isoquinolin-5-ol, phthalazine and quinazoline. The sequence is that of Isoquinoline 1-oxidoreductase subunit alpha (iorA) from Brevundimonas diminuta (Pseudomonas diminuta).